The chain runs to 194 residues: dCTP deaminase (194 aa).

DCTP contacts are provided by residues 110–115 (RSSLAR), aspartate 128, 136–138 (VLE), tyrosine 171, lysine 178, and glutamine 182. The Proton donor/acceptor role is filled by glutamate 138. Residues 174–194 (RKSSKYKDQQEAVASRISQDK) are disordered.

Belongs to the dCTP deaminase family. In terms of assembly, homotrimer.

It catalyses the reaction dCTP + H2O + H(+) = dUTP + NH4(+). The protein operates within pyrimidine metabolism; dUMP biosynthesis; dUMP from dCTP (dUTP route): step 1/2. Catalyzes the deamination of dCTP to dUTP. This is dCTP deaminase from Shewanella frigidimarina (strain NCIMB 400).